Here is a 129-residue protein sequence, read N- to C-terminus: Glyoxalase domain-containing protein 5 homolog (129 aa).

The VOC domain occupies arginine 5 to tyrosine 128.

It belongs to the glyoxalase I family.

The sequence is that of Glyoxalase domain-containing protein 5 homolog (glod5) from Dictyostelium discoideum (Social amoeba).